The following is a 468-amino-acid chain: Siroheme synthase (468 aa).

Residues 1–202 (MDYLPLFARL…EQHDSAEQWM (202 aa)) are precorrin-2 dehydrogenase /sirohydrochlorin ferrochelatase. NAD(+) is bound by residues 22–23 (DI) and 43–44 (PS). A Phosphoserine modification is found at S126. The uroporphyrinogen-III C-methyltransferase stretch occupies residues 214–468 (GEIVLVGAGP…SGKEHLINLA (255 aa)). P223 contacts S-adenosyl-L-methionine. The Proton acceptor role is filled by D246. K268 functions as the Proton donor in the catalytic mechanism. S-adenosyl-L-methionine contacts are provided by residues 299–301 (GGD), 329–330 (TA), M381, and G410.

The protein in the N-terminal section; belongs to the precorrin-2 dehydrogenase / sirohydrochlorin ferrochelatase family. This sequence in the C-terminal section; belongs to the precorrin methyltransferase family.

The catalysed reaction is uroporphyrinogen III + 2 S-adenosyl-L-methionine = precorrin-2 + 2 S-adenosyl-L-homocysteine + H(+). It catalyses the reaction precorrin-2 + NAD(+) = sirohydrochlorin + NADH + 2 H(+). It carries out the reaction siroheme + 2 H(+) = sirohydrochlorin + Fe(2+). It functions in the pathway cofactor biosynthesis; adenosylcobalamin biosynthesis; precorrin-2 from uroporphyrinogen III: step 1/1. The protein operates within cofactor biosynthesis; adenosylcobalamin biosynthesis; sirohydrochlorin from precorrin-2: step 1/1. Its pathway is porphyrin-containing compound metabolism; siroheme biosynthesis; precorrin-2 from uroporphyrinogen III: step 1/1. It participates in porphyrin-containing compound metabolism; siroheme biosynthesis; siroheme from sirohydrochlorin: step 1/1. It functions in the pathway porphyrin-containing compound metabolism; siroheme biosynthesis; sirohydrochlorin from precorrin-2: step 1/1. Its function is as follows. Multifunctional enzyme that catalyzes the SAM-dependent methylations of uroporphyrinogen III at position C-2 and C-7 to form precorrin-2 via precorrin-1. Then it catalyzes the NAD-dependent ring dehydrogenation of precorrin-2 to yield sirohydrochlorin. Finally, it catalyzes the ferrochelation of sirohydrochlorin to yield siroheme. In Tolumonas auensis (strain DSM 9187 / NBRC 110442 / TA 4), this protein is Siroheme synthase.